The following is a 92-amino-acid chain: Small ribosomal subunit protein uS19c (92 aa).

The protein belongs to the universal ribosomal protein uS19 family.

The protein resides in the plastid. It is found in the chloroplast. Protein S19 forms a complex with S13 that binds strongly to the 16S ribosomal RNA. The chain is Small ribosomal subunit protein uS19c from Adiantum capillus-veneris (Maidenhair fern).